The sequence spans 328 residues: GMP reductase (328 aa).

Residue Cys-176 is the Thioimidate intermediate of the active site. 205 to 228 provides a ligand contact to NADP(+); the sequence is IIADGGIRTHGDIAKSIRFGASMI.

This sequence belongs to the IMPDH/GMPR family. GuaC type 2 subfamily.

The enzyme catalyses IMP + NH4(+) + NADP(+) = GMP + NADPH + 2 H(+). Catalyzes the irreversible NADPH-dependent deamination of GMP to IMP. It functions in the conversion of nucleobase, nucleoside and nucleotide derivatives of G to A nucleotides, and in maintaining the intracellular balance of A and G nucleotides. The polypeptide is GMP reductase (Streptococcus pneumoniae serotype 19F (strain G54)).